The following is a 414-amino-acid chain: Gamma-glutamyl phosphate reductase (414 aa).

The protein belongs to the gamma-glutamyl phosphate reductase family.

It is found in the cytoplasm. It catalyses the reaction L-glutamate 5-semialdehyde + phosphate + NADP(+) = L-glutamyl 5-phosphate + NADPH + H(+). Its pathway is amino-acid biosynthesis; L-proline biosynthesis; L-glutamate 5-semialdehyde from L-glutamate: step 2/2. Its function is as follows. Catalyzes the NADPH-dependent reduction of L-glutamate 5-phosphate into L-glutamate 5-semialdehyde and phosphate. The product spontaneously undergoes cyclization to form 1-pyrroline-5-carboxylate. This chain is Gamma-glutamyl phosphate reductase, found in Bacillus anthracis (strain A0248).